The primary structure comprises 598 residues: F-box/WD repeat-containing protein 8 (598 aa).

Met1 bears the N-acetylmethionine mark. The tract at residues 20–97 (SQALRRRRRL…PDRDATEPEP (78 aa)) is disordered. Residues 29-44 (LEAGERRSPRRPEAGA) show a composition bias toward basic and acidic residues. Positions 51–65 (GYLGLAQGLLEGAGR) are enriched in low complexity. Over residues 73–93 (RGGDRKDTSSRSRSPPDRDAT) the composition is skewed to basic and acidic residues. Ser84 bears the Phosphoserine mark. Ser86 carries the post-translational modification Phosphoserine; by MTOR. An F-box domain is found at 113-159 (PFFDVRLPYELAINIFQYLNRRELGLCAQVSKTWKVIAEDEVLWYRL). WD repeat units follow at residues 201–250 (AVSE…LESE), 259–299 (QPYV…FEHD), 300–340 (ARIQ…SEFE), 341–383 (VQKL…LHYV), 384–429 (YGQP…SKLG), 430–475 (NALG…SAHQ), 476–513 (LGVS…EVHS), and 514–561 (RHPV…AYEF).

Component of the Cul7-RING(FBXW8) complex consisting of CUL7, RBX1, SKP1 and FBXW8; within the complex interacts with CUL7 and SKP1. Interacts with GLMN isoform 1. Interacts with OBSL1, CUL1, CUL2, CCT6B, PFDN5, CCT2, CCT3, CCT6A, CCT7, VBP1, CCDC8, ARF1, TRIP13, PDCD5 and GORASP1. Interacts with MAP4K1/HPK1 (when autophosphorylated). Associated component of the 3M complex. Interacts with POUF51 (when phosphorylated on 'Ser-347'). Phosphorylation at Ser-86 by mTORC2 promotes FBXW8 stabilization, allowing its translocation to the cytosol in response to insulin. In terms of tissue distribution, widely expressed. Expressed at higher level in skeletal muscle, cartilage and lung.

It is found in the cytoplasm. Its subcellular location is the perinuclear region. The protein localises to the golgi apparatus. It localises to the cytosol. Its pathway is protein modification; protein ubiquitination. Substrate-recognition component of the Cul7-RING(FBXW8) ubiquitin ligase complex, which mediates the ubiquitination and subsequent proteasomal degradation of target proteins. The Cul7-RING(FBXW8) complex mediates ubiquitination and consequent degradation of GORASP1, acting as a component of the ubiquitin ligase pathway that regulates Golgi morphogenesis and dendrite patterning in brain. Mediates ubiquitination and degradation of IRS1 in a mTOR-dependent manner: the Cul7-RING(FBXW8) complex recognizes and binds IRS1 previously phosphorylated by S6 kinase (RPS6KB1 or RPS6KB2). The Cul7-RING(FBXW8) complex also mediates ubiquitination of MAP4K1/HPK1: recognizes and binds autophosphorylated MAP4K1/HPK1, leading to its degradation, thereby affecting cell proliferation and differentiation. The Cul7-RING(FBXW8) complex also mediates ubiquitination of phosphorylated cyclin-D1 (CCND1). The Cul7-RING(FBXW8) complex is however not a major regulator of CCND1 stability during the G1/S transition. Associated component of the 3M complex, suggesting that it mediates some of 3M complex functions. The protein is F-box/WD repeat-containing protein 8 (Fbxw8) of Mus musculus (Mouse).